A 294-amino-acid chain; its full sequence is tRNA dimethylallyltransferase (294 aa).

10–17 contributes to the ATP binding site; the sequence is GPTAVGKT. Substrate is bound at residue 12–17; the sequence is TAVGKT. An interaction with substrate tRNA region spans residues 35 to 38; the sequence is DSQQ.

The protein belongs to the IPP transferase family. As to quaternary structure, monomer. The cofactor is Mg(2+).

It catalyses the reaction adenosine(37) in tRNA + dimethylallyl diphosphate = N(6)-dimethylallyladenosine(37) in tRNA + diphosphate. Catalyzes the transfer of a dimethylallyl group onto the adenine at position 37 in tRNAs that read codons beginning with uridine, leading to the formation of N6-(dimethylallyl)adenosine (i(6)A). This chain is tRNA dimethylallyltransferase, found in Streptococcus pneumoniae (strain Taiwan19F-14).